The chain runs to 744 residues: Photosystem I P700 chlorophyll a apoprotein A2 (744 aa).

The next 8 membrane-spanning stretches (helical) occupy residues 48-71 (LFATHFGHLAIIFLWASGNVFHIA), 137-160 (LYAGAIGLLLLAAVFLFAGWLHLQ), 177-201 (LNHHLAGLFGVSSLAWTGHLVHVAI), 275-293 (MAHHHLAIAVIFIVAGHMY), 337-360 (LHFQLALALACLGVVTSLVAQHMY), 376-402 (AALYTHHQYIAGFLMVGAFAHGAIFLV), 424-446 (AIISHLSWVSLFLGFHTLGLYVH), and 527-545 (FLVHHAIALGLHTTTLILV). 2 residues coordinate [4Fe-4S] cluster: Cys-569 and Cys-578. 2 helical membrane-spanning segments follow: residues 585–606 (AFYLAMFWMLNTIGWVTFYWHW) and 653–675 (LAVWAWMFLFGHLVWATGFMFLI). Chlorophyll a is bound by residues His-664, Met-672, and Tyr-680. A phylloquinone-binding site is contributed by Trp-681. A helical transmembrane segment spans residues 717–737 (LVGLAHFTVGYVLTYAAFVIA).

This sequence belongs to the PsaA/PsaB family. As to quaternary structure, the PsaA/B heterodimer binds the P700 chlorophyll special pair and subsequent electron acceptors. PSI consists of a core antenna complex that captures photons, and an electron transfer chain that converts photonic excitation into a charge separation. The cyanobacterial PSI reaction center is composed of one copy each of PsaA,B,C,D,E,F,I,J,K,L,M and X, and forms trimeric complexes. It depends on PSI electron transfer chain: 5 chlorophyll a, 1 chlorophyll a', 2 phylloquinones and 3 4Fe-4S clusters. PSI core antenna: 90 chlorophyll a, 22 carotenoids, 3 phospholipids and 1 galactolipid. P700 is a chlorophyll a/chlorophyll a' dimer, A0 is one or more chlorophyll a, A1 is one or both phylloquinones and FX is a shared 4Fe-4S iron-sulfur center. as a cofactor.

It localises to the cellular thylakoid membrane. The catalysed reaction is reduced [plastocyanin] + hnu + oxidized [2Fe-2S]-[ferredoxin] = oxidized [plastocyanin] + reduced [2Fe-2S]-[ferredoxin]. In terms of biological role, psaA and PsaB bind P700, the primary electron donor of photosystem I (PSI), as well as the electron acceptors A0, A1 and FX. PSI is a plastocyanin/cytochrome c6-ferredoxin oxidoreductase, converting photonic excitation into a charge separation, which transfers an electron from the donor P700 chlorophyll pair to the spectroscopically characterized acceptors A0, A1, FX, FA and FB in turn. Oxidized P700 is reduced on the lumenal side of the thylakoid membrane by plastocyanin or cytochrome c6. In Synechococcus sp. (strain JA-2-3B'a(2-13)) (Cyanobacteria bacterium Yellowstone B-Prime), this protein is Photosystem I P700 chlorophyll a apoprotein A2.